Here is a 180-residue protein sequence, read N- to C-terminus: ATP-dependent protease subunit HslV (180 aa).

Thr6 is an active-site residue. Ala164, Cys167, and Thr170 together coordinate Na(+).

The protein belongs to the peptidase T1B family. HslV subfamily. A double ring-shaped homohexamer of HslV is capped on each side by a ring-shaped HslU homohexamer. The assembly of the HslU/HslV complex is dependent on binding of ATP.

Its subcellular location is the cytoplasm. The catalysed reaction is ATP-dependent cleavage of peptide bonds with broad specificity.. Allosterically activated by HslU binding. Its function is as follows. Protease subunit of a proteasome-like degradation complex believed to be a general protein degrading machinery. In Borrelia recurrentis (strain A1), this protein is ATP-dependent protease subunit HslV.